Reading from the N-terminus, the 95-residue chain is MAVACGQDGVAGDCRFLGDLFVMWLEQSLSAILYVLTLLPMPDFMKGQSIGGMLGNAGSTILWFADVFMIGPALVMIGAAMIFFLLRRVLTLGIW.

A run of 3 helical transmembrane segments spans residues 20–40, 44–64, and 66–86; these read LFVMWLEQSLSAILYVLTLLP, FMKGQSIGGMLGNAGSTILWF, and DVFMIGPALVMIGAAMIFFLL.

It belongs to the inovirus G6P protein family. Interacts with G3P; this interaction is required for proper integration of G3P and G6P into the virion.

Its subcellular location is the virion. The protein localises to the host membrane. Functionally, plays essential roles both in the entry of the viral genome into the bacterial host and in budding process. The formation of the G3P-G6P complex termed adsorption complex is essential for correct termination of filamentous phage assembly. This Xanthomonas phage phiLf (Bacteriophage phi-Lf) protein is Head virion protein G6P (VI).